Consider the following 412-residue polypeptide: Early growth response protein 2b (412 aa).

Residues 269-299 are disordered; it reads YTPQNLPLRPILRPRKYPNRPSKTPVHERPY. 3 C2H2-type zinc fingers span residues 299 to 323, 329 to 351, and 357 to 379; these read YPCPAEGCDRRFSRSDELTRHIRIH, FQCRICMRNFSRSDHLTTHIRTH, and FACDFCGRKFARSDERKRHTKIH. Residues 371–412 are disordered; it reads ERKRHTKIHLRQKERKSSSSSTGVSSSERGVATSICSSSSNQ. Over residues 374-384 the composition is skewed to basic residues; the sequence is RHTKIHLRQKE. A compositionally biased stretch (low complexity) spans 388 to 401; that stretch reads SSSSTGVSSSERGV.

It belongs to the EGR C2H2-type zinc-finger protein family.

The protein resides in the nucleus. Sequence-specific DNA-binding transcription factor. Binds to two specific DNA sites located in the promoter region of HOXA4. This chain is Early growth response protein 2b (egr2b), found in Danio rerio (Zebrafish).